Here is a 126-residue protein sequence, read N- to C-terminus: UPF0292 protein TSIB_0423 (126 aa).

Positions 20–100 constitute a Toprim domain; the sequence is NGVILVEGMR…RVDTNTRREL (81 aa). Positions 26, 69, and 71 each coordinate Mg(2+).

Belongs to the UPF0292 family. The cofactor is Mg(2+).

In Thermococcus sibiricus (strain DSM 12597 / MM 739), this protein is UPF0292 protein TSIB_0423.